Reading from the N-terminus, the 487-residue chain is MSLAKDNIWKLLAPLVVMGVMFLIPVPDGMPPQAWHYFAVFVAMIVGMILEPIPATAISFIAVTICVIGSNYLLFDAKELADPAFNAQKQALKWGLAGFSSTTVWLVFGAFIFALGYEVSGLGRRIALFLVKFMGKRTLTLGYAIVIIDILLAPFTPSNTARTGGTVFPVIKNLPPLFKSFPNDPSARRIGGYLMWMMVISTSLSSSMFVTGAAPNVLGLEFVSKIAGIQISWLQWFLCFLPVGVILLIIAPWLSYVLYKPEITHSEEVATWAGDELKTMGALTRREWTLIGLVLLSLGLWVFGSEVINATAVGLLAVSLMLALHVVPWKDITRYNSAWNTLVNLATLVVMANGLTRSGFIDWFAGTMSTHLEGFSPNATVIVLVLVFYFAHYLFASLSAHTATMLPVILAVGKGIPGVPMEQLCILLVLSIGIMGCLTPYATGPGVIIYGCGYVKSKDYWRLGAIFGVIYISMLLLVGWPILAMWN.

Transmembrane regions (helical) follow at residues 11–31 (LLAP…DGMP), 60–80 (FIAV…AKEL), 95–115 (GLAG…IFAL), 138–158 (TLTL…FTPS), 190–210 (IGGY…SMFV), 214–234 (APNV…ISWL), 237–257 (FLCF…LSYV), 288–308 (WTLI…SEVI), 309–329 (NATA…VVPW), 345–365 (LATL…DWFA), 379–399 (ATVI…ASLS), 401–421 (HTAT…GVPM), 424–444 (LCIL…YATG), and 463–483 (LGAI…WPIL).

The protein belongs to the SLC13A/DASS transporter (TC 2.A.47) family. DIT1 subfamily.

The protein resides in the cell inner membrane. In terms of biological role, responsible for the uptake of citrate in exchange to the efflux of succinate. Has a relatively broad specificity for C(4)-dicarboxylates and tricarboxylates. The polypeptide is Citrate/succinate antiporter (citT) (Escherichia coli O157:H7).